The following is a 250-amino-acid chain: Probable transcriptional regulatory protein DP2908 (250 aa).

The protein belongs to the TACO1 family.

It localises to the cytoplasm. In Desulfotalea psychrophila (strain LSv54 / DSM 12343), this protein is Probable transcriptional regulatory protein DP2908.